The following is a 481-amino-acid chain: MASAASVTSLADEVNCPICQGTLREPVTIDCGHNFCRACLTRYCEIPGPDLEESPTCPLCKEPFRPGSFRPNWQLANVVENIERLQLVSTLGLGEEDVCQEHGEKIYFFCEDDEMQLCVVCREAGEHATHTMRFLEDAAAPYREQIHKCLKCLRKEREEIQEIQSRENKRMQVLLTQVSTKRQQVISEFAHLRKFLEEQQSILLAQLESQDGDILRQRDEFDLLVAGEICRFSALIEELEEKNERPARELLTDIRSTLIRCETRKCRKPVAVSPELGQRIRDFPQQALPLQREMKMFLEKLCFELDYEPAHISLDPQTSHPKLLLSEDHQRAQFSYKWQNSPDNPQRFDRATCVLAHTGITGGRHTWVVSIDLAHGGSCTVGVVSEDVQRKGELRLRPEEGVWAVRLAWGFVSALGSFPTRLTLKEQPRQVRVSLDYEVGWVTFTNAVTREPIYTFTASFTRKVIPFFGLWGRGSSFSLSS.

An RING-type zinc finger spans residues 16-61 (CPICQGTLREPVTIDCGHNFCRACLTRYCEIPGPDLEESPTCPLCK). The segment at 94-135 (GEEDVCQEHGEKIYFFCEDDEMQLCVVCREAGEHATHTMRFL) adopts a B box-type zinc-finger fold. Zn(2+) contacts are provided by Cys-99, His-102, Cys-121, and His-127. A coiled-coil region spans residues 150-177 (LKCLRKEREEIQEIQSRENKRMQVLLTQ). The region spanning 292–481 (REMKMFLEKL…GRGSSFSLSS (190 aa)) is the B30.2/SPRY domain.

Belongs to the TRIM/RBCC family. As to quaternary structure, interacts with IFNAR1; this interaction prevents association of IFNAR1 with TYK2.

It localises to the cytoplasm. In terms of biological role, E3 ligase that plays an essential role in the differentiation and survival of terminal erythroid cells. May directly bind to PTEN and promote its ubiquitination, resulting in its proteasomal degradation and activation of hypertrophic signaling. In addition, plays a role in immune response regulation by repressing the phosphorylation of STAT1 and STAT2 in the interferon/JAK/STAT signaling pathway independent of its E3 ligase activity. Mechanistically, interacts with the intracellular domain of IFNAR1 and thereby inhibits the association between TYK2 and IFNAR1. The chain is Tripartite motif-containing protein 10 (TRIM10) from Homo sapiens (Human).